The primary structure comprises 128 residues: Cholecystokinin B (128 aa).

Residues 1-20 form the signal peptide; sequence MCSGVCICLLLAMLSASSKA. Residues 21–108 constitute a propeptide that is removed on maturation; sequence HQATGSLGED…FDQSHRINDR (88 aa). The disordered stretch occupies residues 47 to 67; sequence YARASSAGQKKSFQRTDGDQR. Tyr110 is modified (sulfotyrosine). Position 116 is a phenylalanine amide (Phe116). Positions 120 to 128 are excised as a propeptide; the sequence is SAEEYEYSS.

The protein belongs to the gastrin/cholecystokinin family. Post-translationally, the precursor is cleaved by proteases to produce a number of active cholecystokinins. Brain and gastrointestinal tract.

It is found in the secreted. In Xenopus laevis (African clawed frog), this protein is Cholecystokinin B (cck-b).